The sequence spans 146 residues: MGRFIFISFGLLVVFLSLSGTEAECLPDWFHYEGHCYRVFDEPKTWADAEKFCSEQANGGHLVSVHSKKEAGLVGVLAYQTLESPIVWMGLSKIWNQCDWTWTNGAKLKYEAWAEESYCIHITSKKKEWKSLPCRNYGHFVCKSPA.

The first 23 residues, 1–23 (MGRFIFISFGLLVVFLSLSGTEA), serve as a signal peptide directing secretion. Disulfide bonds link C25–C36, C53–C142, and C119–C134. Positions 32 to 143 (YEGHCYRVFD…CRNYGHFVCK (112 aa)) constitute a C-type lectin domain.

It belongs to the snaclec family. As to quaternary structure, heterodimer; disulfide-linked. As to expression, expressed by the venom gland.

The protein localises to the secreted. Its function is as follows. Interferes with one step of hemostasis (modulation of platelet aggregation, or coagulation cascade, for example). This chain is Snaclec 5, found in Echis pyramidum leakeyi (Leakey's carpet viper).